The following is a 98-amino-acid chain: uncharacterized protein (98 aa).

An N-terminal signal peptide occupies residues 1–23 (MKKMQSIVLALSLVLVAPMAAQA). The segment at 68–98 (WHLHGPPPPPRHHKKAPHDHHGGHGPGKHHR) is disordered. Residues 77-98 (PRHHKKAPHDHHGGHGPGKHHR) show a composition bias toward basic residues.

It to E.coli YpeC.

This is an uncharacterized protein from Escherichia coli (strain K12).